The sequence spans 274 residues: Large ribosomal subunit protein uL2 (274 aa).

2 disordered regions span residues 28–53 (KPYA…TVRH) and 223–274 (VAMN…RRTK). Low complexity predominate over residues 39–48 (KSGGRNNNGR). Residues 254 to 274 (KGAKTRKNKRTDKFIVRRRTK) are compositionally biased toward basic residues.

The protein belongs to the universal ribosomal protein uL2 family. In terms of assembly, part of the 50S ribosomal subunit. Forms a bridge to the 30S subunit in the 70S ribosome.

In terms of biological role, one of the primary rRNA binding proteins. Required for association of the 30S and 50S subunits to form the 70S ribosome, for tRNA binding and peptide bond formation. It has been suggested to have peptidyltransferase activity; this is somewhat controversial. Makes several contacts with the 16S rRNA in the 70S ribosome. The sequence is that of Large ribosomal subunit protein uL2 from Pseudoalteromonas translucida (strain TAC 125).